Consider the following 362-residue polypeptide: Aminomethyltransferase (362 aa).

This sequence belongs to the GcvT family. In terms of assembly, the glycine cleavage system is composed of four proteins: P, T, L and H.

It carries out the reaction N(6)-[(R)-S(8)-aminomethyldihydrolipoyl]-L-lysyl-[protein] + (6S)-5,6,7,8-tetrahydrofolate = N(6)-[(R)-dihydrolipoyl]-L-lysyl-[protein] + (6R)-5,10-methylene-5,6,7,8-tetrahydrofolate + NH4(+). Its function is as follows. The glycine cleavage system catalyzes the degradation of glycine. The polypeptide is Aminomethyltransferase (Listeria monocytogenes serotype 4a (strain HCC23)).